A 320-amino-acid polypeptide reads, in one-letter code: Adhesin MafA 1/4 (320 aa).

Positions 1-18 (MRARLLIPILFSVFILSA) are cleaved as a signal peptide. C19 carries the N-palmitoyl cysteine lipid modification. C19 is lipidated: S-diacylglycerol cysteine. The segment at 287–320 (NHTGNSAPSVEADNSHEGYGYSDEAVRQHRQGQP) is disordered.

This sequence belongs to the MafA family.

It localises to the cell outer membrane. This chain is Adhesin MafA 1/4 (mafA1), found in Neisseria gonorrhoeae (strain ATCC 700825 / FA 1090).